We begin with the raw amino-acid sequence, 557 residues long: Trigger factor (557 aa).

A PPIase FKBP-type domain is found at 169–255; sequence GDVVVIDFQA…LKEIKTKELP (87 aa). A disordered region spans residues 438–557; it reads WVDSEGNPTE…KAGKKSKKDK (120 aa). A compositionally biased stretch (basic and acidic residues) spans 455-466; it reads SEGEDRQERSES.

It belongs to the FKBP-type PPIase family. Tig subfamily.

Its subcellular location is the cytoplasm. The catalysed reaction is [protein]-peptidylproline (omega=180) = [protein]-peptidylproline (omega=0). Functionally, involved in protein export. Acts as a chaperone by maintaining the newly synthesized protein in an open conformation. Functions as a peptidyl-prolyl cis-trans isomerase. In Synechococcus sp. (strain JA-3-3Ab) (Cyanobacteria bacterium Yellowstone A-Prime), this protein is Trigger factor.